A 970-amino-acid chain; its full sequence is Protein translocase subunit SecA (970 aa).

ATP contacts are provided by residues glutamine 99, 117–121, and aspartate 631; that span reads GEGKT.

Belongs to the SecA family. In terms of assembly, monomer and homodimer. Part of the essential Sec protein translocation apparatus which comprises SecA, SecYEG and auxiliary proteins SecDF. Other proteins may also be involved.

It is found in the cell inner membrane. It localises to the cytoplasm. It carries out the reaction ATP + H2O + cellular proteinSide 1 = ADP + phosphate + cellular proteinSide 2.. Part of the Sec protein translocase complex. Interacts with the SecYEG preprotein conducting channel. Has a central role in coupling the hydrolysis of ATP to the transfer of proteins into and across the cell membrane, serving as an ATP-driven molecular motor driving the stepwise translocation of polypeptide chains across the membrane. The chain is Protein translocase subunit SecA from Chlamydia pneumoniae (Chlamydophila pneumoniae).